A 428-amino-acid chain; its full sequence is 3-phosphoshikimate 1-carboxyvinyltransferase (428 aa).

Residues lysine 19, serine 20, and arginine 24 each contribute to the 3-phosphoshikimate site. Residue lysine 19 coordinates phosphoenolpyruvate. Residues glycine 91 and arginine 119 each contribute to the phosphoenolpyruvate site. 3-phosphoshikimate contacts are provided by serine 164, glutamine 166, aspartate 312, and lysine 339. Glutamine 166 serves as a coordination point for phosphoenolpyruvate. Aspartate 312 functions as the Proton acceptor in the catalytic mechanism. Phosphoenolpyruvate is bound by residues arginine 343 and arginine 386.

It belongs to the EPSP synthase family. Monomer.

The protein localises to the cytoplasm. The catalysed reaction is 3-phosphoshikimate + phosphoenolpyruvate = 5-O-(1-carboxyvinyl)-3-phosphoshikimate + phosphate. It functions in the pathway metabolic intermediate biosynthesis; chorismate biosynthesis; chorismate from D-erythrose 4-phosphate and phosphoenolpyruvate: step 6/7. In terms of biological role, catalyzes the transfer of the enolpyruvyl moiety of phosphoenolpyruvate (PEP) to the 5-hydroxyl of shikimate-3-phosphate (S3P) to produce enolpyruvyl shikimate-3-phosphate and inorganic phosphate. The sequence is that of 3-phosphoshikimate 1-carboxyvinyltransferase from Bacillus subtilis (strain 168).